Consider the following 729-residue polypeptide: Glycine--tRNA ligase (729 aa).

A mitochondrion-targeting transit peptide spans 1 to 33 (MPCLLPSLLRATRAALPLLSPPRVVAASASQRL). Residues 53-109 (LLAPLRLAVRQQGDFVRKLKEDKAPQVDVDRAVAELKARKRVLEAKELALQPKDDIV) enclose the WHEP-TRS domain. N6-acetyllysine is present on K194. E289 is a glycine binding site. ATP contacts are provided by residues 321-323 (RNE) and 332-333 (RV). Position 340 (E340) interacts with glycine. Y443 carries the post-translational modification Phosphotyrosine. ATP is bound at residue 447 to 448 (EI). N6-acetyllysine is present on K491. 566–568 (EPS) is a binding site for glycine. R573 serves as a coordination point for ATP. S690 carries the phosphoserine modification. T726 carries the post-translational modification Phosphothreonine.

This sequence belongs to the class-II aminoacyl-tRNA synthetase family. In terms of assembly, homodimer.

It localises to the cytoplasm. Its subcellular location is the mitochondrion. The protein localises to the cell projection. The protein resides in the axon. It is found in the secreted. It localises to the extracellular exosome. The catalysed reaction is tRNA(Gly) + glycine + ATP = glycyl-tRNA(Gly) + AMP + diphosphate. The enzyme catalyses 2 ATP + H(+) = P(1),P(4)-bis(5'-adenosyl) tetraphosphate + diphosphate. Catalyzes the ATP-dependent ligation of glycine to the 3'-end of its cognate tRNA, via the formation of an aminoacyl-adenylate intermediate (Gly-AMP). Also produces diadenosine tetraphosphate (Ap4A), a universal pleiotropic signaling molecule needed for cell regulation pathways, by direct condensation of 2 ATPs. Thereby, may play a special role in Ap4A homeostasis. The sequence is that of Glycine--tRNA ligase (Gars1) from Mus musculus (Mouse).